The primary structure comprises 190 residues: Dynactin subunit 6 (190 aa).

A Phosphothreonine; by CDK1 modification is found at Thr-186.

The protein belongs to the dynactin subunits 5/6 family. Dynactin subunit 6 subfamily. As to quaternary structure, subunit of dynactin, a multiprotein complex part of a tripartite complex with dynein and a adapter, such as BICDL1, BICD2 or HOOK3. The dynactin complex is built around ACTR1A/ACTB filament and consists of an actin-related filament composed of a shoulder domain, a pointed end and a barbed end. Its length is defined by its flexible shoulder domain. The soulder is composed of 2 DCTN1 subunits, 4 DCTN2 and 2 DCTN3. The 4 DCNT2 (via N-terminus) bind the ACTR1A filament and act as molecular rulers to determine the length. The pointed end is important for binding dynein-dynactin cargo adapters. Consists of 4 subunits: ACTR10, DCNT4, DCTN5 and DCTN6. Within the complex DCTN6 forms a heterodimer with DCTN5. The barbed end is composed of a CAPZA1:CAPZB heterodimers, which binds ACTR1A/ACTB filament and dynactin and stabilizes dynactin. Interacts with PLK1. Interacts with N4BP2L1. Phosphorylation at Thr-186 by CDK1 during mitotic prometaphase creates a binding site for PLK1 that facilitates its recruitment to kinetochores. Ubiquitous.

The protein localises to the cytoplasm. Its subcellular location is the cytoskeleton. The protein resides in the chromosome. It localises to the centromere. It is found in the kinetochore. In terms of biological role, part of the dynactin complex that activates the molecular motor dynein for ultra-processive transport along microtubules. The protein is Dynactin subunit 6 of Homo sapiens (Human).